The following is a 32-amino-acid chain: GKSSSRPLGDATLGDLDFDIEVTQDYWDDLAR.

Residues glycine 1–arginine 32 form the GH18 domain. The active-site Proton donor is glutamate 21.

The protein belongs to the glycosyl hydrolase 18 family. Chitinase class II subfamily.

The enzyme catalyses Hydrolysis of terminal non-reducing N-acetyl-D-hexosamine residues in N-acetyl-beta-D-hexosaminides.. Activity is decreased by HgCl(2) and maltose. Activity is stimulated by Na(2)SeO(4), BaCl(2), MgCl(2), chondroitin 6-sulfate and phenylmethylsulfonyl fluoride. Preferentially hydrolyzes pNP-GlcNAc, hydrolyzes pNP-GalNAc to a lesser extent. This is Beta-hexosaminidase from Palythoa caribaeorum (White encrusting zoanthid coral).